Consider the following 98-residue polypeptide: Large ribosomal subunit protein uL23 (98 aa).

It belongs to the universal ribosomal protein uL23 family. Part of the 50S ribosomal subunit. Contacts protein L29, and trigger factor when it is bound to the ribosome.

One of the early assembly proteins it binds 23S rRNA. One of the proteins that surrounds the polypeptide exit tunnel on the outside of the ribosome. Forms the main docking site for trigger factor binding to the ribosome. In Bordetella petrii (strain ATCC BAA-461 / DSM 12804 / CCUG 43448), this protein is Large ribosomal subunit protein uL23.